Here is a 72-residue protein sequence, read N- to C-terminus: Large ribosomal subunit protein bL28 (72 aa).

This sequence belongs to the bacterial ribosomal protein bL28 family.

In Chlorobium phaeobacteroides (strain DSM 266 / SMG 266 / 2430), this protein is Large ribosomal subunit protein bL28.